A 160-amino-acid polypeptide reads, in one-letter code: Large ribosomal subunit protein uL15 (160 aa).

Residues 1-14 (MKLNDISDNPGSSK) are compositionally biased toward polar residues. Positions 1-35 (MKLNDISDNPGSSKSRMRVGRGIGSGKGKTCGRGV) are disordered. Gly residues predominate over residues 21–35 (RGIGSGKGKTCGRGV).

The protein belongs to the universal ribosomal protein uL15 family. In terms of assembly, part of the 50S ribosomal subunit.

Its function is as follows. Binds to the 23S rRNA. In Beijerinckia indica subsp. indica (strain ATCC 9039 / DSM 1715 / NCIMB 8712), this protein is Large ribosomal subunit protein uL15.